The following is a 213-amino-acid chain: LexA repressor (213 aa).

A DNA-binding region (H-T-H motif) is located at residues 31-51 (RAEISRELGFRSPNAAEEYLK). Residues serine 129 and lysine 166 each act as for autocatalytic cleavage activity in the active site.

Belongs to the peptidase S24 family. As to quaternary structure, homodimer.

The enzyme catalyses Hydrolysis of Ala-|-Gly bond in repressor LexA.. Represses a number of genes involved in the response to DNA damage (SOS response), including recA and lexA. In the presence of single-stranded DNA, RecA interacts with LexA causing an autocatalytic cleavage which disrupts the DNA-binding part of LexA, leading to derepression of the SOS regulon and eventually DNA repair. This is LexA repressor from Mannheimia succiniciproducens (strain KCTC 0769BP / MBEL55E).